A 2193-amino-acid chain; its full sequence is ATP-dependent helicase BRM (2193 aa).

M1 bears the N-acetylmethionine mark. Positions 1-10 (MQSGGSGGGP) are enriched in gly residues. Disordered stretches follow at residues 1–126 (MQSG…QEGQ), 175–231 (MQDL…PGNM), 293–466 (QKAG…GFTK), 511–558 (SPAI…DNVG), and 580–649 (TSTD…ASAR). Positions 23 to 62 (ASTSSAASPSSSSSSVQQQQQQQQQQQQQQQLASRQQQQQ) are enriched in low complexity. Residues 38–58 (VQQQQQQQQQQQQQQQLASRQ) adopt a coiled-coil conformation. Residues 79 to 88 (GVQGMMGGGN) are compositionally biased toward gly residues. 3 stretches are compositionally biased toward low complexity: residues 91-102 (SSPGSMQMPQQS), 110-126 (QQQQ…QEGQ), and 180-192 (PSSQ…SKPS). Polar residues predominate over residues 204–223 (ESSSQQRNETKSHPQQQVGT). The span at 301–320 (ASQSPSIPISSQPASSSVVP) shows a compositional bias: low complexity. Polar residues-rich tracts occupy residues 325 to 339 (PHAN…QSGS), 347 to 358 (STGSFASTSSPR), 383 to 412 (QPTN…STKK), and 421 to 433 (QMQQ…TPTP). Residues 445–463 (SNSSLQSGQGTQQAQQRSG) show a composition bias toward low complexity. One can recognise a QLQ domain in the interval 463-499 (GFTKQQLHVLKAQILAFRRLKKGEGSLPPELLQAISP). 2 stretches are compositionally biased toward basic and acidic residues: residues 517 to 537 (VQDR…ECGK) and 611 to 621 (PRSDSTADKGK). A compositionally biased stretch (polar residues) spans 626 to 638 (DGSQSKVPPQANS). The Nuclear localization signal 1 signature appears at 705–712 (LKKINGLL). Residues 726–795 (VLRLQIEEKK…QKAVREKQLK (70 aa)) are a coiled coil. The Helicase ATP-binding domain occupies 993–1158 (LSLYNNKLNG…WSLLNLLLPD (166 aa)). 1006-1013 (DEMGLGKT) lines the ATP pocket. A coiled-coil region spans residues 1109 to 1129 (DEAQRMKDRESVLARDLDRYR). The Helicase C-terminal domain maps to 1312 to 1489 (ILDRILIKLQ…QYKIDMADEV (178 aa)). 2 disordered regions span residues 1583 to 1775 (SKKP…DEEQ) and 1789 to 1894 (LRPR…NAGA). The segment covering 1608 to 1617 (KRGRPKSKKI) has biased composition (basic residues). Residues 1618–1638 (NYKEIEDDIAGYSEESSEERN) adopt a coiled-coil conformation. Phosphoserine is present on S1641. The span at 1642–1657 (GNEEEGDIRQFDDDEL) shows a compositional bias: acidic residues. Positions 1821 to 1832 (TVVDSHSSRQDQ) are enriched in basic and acidic residues. Over residues 1833 to 1842 (SDSSSRLRSV) the composition is skewed to low complexity. Polar residues-rich tracts occupy residues 1848–1870 (ASTS…QLTV) and 1882–1892 (DGTSPISSSNA). Residues 1895–2005 (RMSHIIQKRC…NLFFDLLKMS (111 aa)) form the Bromo domain. The Nuclear localization signal 2 motif lies at 1901–1908 (QKRCKIVI). Positions 2022-2032 (GSAPTLVSTPT) are enriched in polar residues. A disordered region spans residues 2022-2193 (GSAPTLVSTP…DSGKRRPSHL (172 aa)). S2137 is modified (phosphoserine). The span at 2149 to 2166 (LAQQQRWPNQPTHPNNSG) shows a compositional bias: polar residues.

It belongs to the SNF2/RAD54 helicase family. As to quaternary structure, interacts with SWI3B, SWI3C, H3 and H4, but not with SWI3A, SWI3D or BSH. Interacts with LFY. Interacts with REF6. Binds to FGT1. In terms of tissue distribution, highly expressed in inflorescences and leaves. Low expression in siliques, roots and seedlings. Detected in shoot apical meristem, root meristem, vascular tissue of developing leaves, petals, stamens filaments, anthers and carpels.

The protein localises to the nucleus. The enzyme catalyses ATP + H2O = ADP + phosphate + H(+). In terms of biological role, ATPase subunit of a multiprotein complex equivalent of the SWI/SNF complex that acts by remodeling the chromatin by catalyzing an ATP-dependent alteration in the structure of nucleosomal DNA. Represses embryonic genes in leaves and controls shoot development and flowering. Activates flower homeotic genes. The association of BRM with its target genes requires REF6. Necessary to acquire heat stress (HS) memory, by globally binding to HS memory genes. This chain is ATP-dependent helicase BRM, found in Arabidopsis thaliana (Mouse-ear cress).